A 66-amino-acid chain; its full sequence is MLKNLKDLTLEDMKAKRLTLKKEYMDLRFKTVVGHVENPLKKRELRRDIARLNTIIHEYAIGIRKV.

This sequence belongs to the universal ribosomal protein uL29 family.

In Borrelia duttonii (strain Ly), this protein is Large ribosomal subunit protein uL29.